The sequence spans 292 residues: Type II methyltransferase M.SmaI (292 aa).

Positions 110-130 are disordered; it reads WRDKDDKNKGRAMSYRPPTPE.

The protein belongs to the N(4)/N(6)-methyltransferase family. N(4) subfamily.

It catalyses the reaction a 2'-deoxycytidine in DNA + S-adenosyl-L-methionine = an N(4)-methyl-2'-deoxycytidine in DNA + S-adenosyl-L-homocysteine + H(+). A beta subtype methylase thatnrecognizes the double-stranded sequence 5'-CCCGGG-3', methylates C-2 on both strands, and protects the DNA from cleavage by the SmaI endonuclease. In Serratia marcescens, this protein is Type II methyltransferase M.SmaI (smaIM).